The primary structure comprises 515 residues: Tripartite motif-containing protein 5 (515 aa).

Ala2 bears the N-acetylalanine mark. The segment at 15–60 (CPICLELLTEPLSLPCGHSFCQACITANHKESMLYKEEERSCPVCR) adopts an RING-type zinc-finger fold. Position 87 is a phosphoserine (Ser87). Residues 92 to 133 (QKVDHCARHGEKLLLFCQEDSKVICWLCERSQEHRGHHTFLM) form a B box-type zinc finger. Zn(2+) contacts are provided by Cys97, His100, Cys119, and His125. Residues 137–225 (AQEYHVKLQT…LTKSETEMVQ (89 aa)) adopt a coiled-coil conformation. The interval 187–200 (FEQLREILDWEESN) is required for interaction with GABARAP and for autophagy. The B30.2/SPRY domain maps to 283–515 (LKGMLDMFRE…VPMTLCSPSS (233 aa)).

The protein belongs to the TRIM/RBCC family. Can form homodimers and homotrimers. In addition to lower-order dimerization, also exhibits a higher-order multimerization and both low- and high-order multimerizations are essential for its restriction activity. Interacts with BTBD1 and BTBD2. Interacts with PSMC4, PSMC5, PSMD7 and HSPA8/HSC70. Interacts (via B30.2/SPRY domain) with HSPA1A/B. Interacts with PSMC2, MAP3K7/TAK1, TAB2 and TAB3. Interacts with SQSTM1. Interacts with TRIM6 and TRIM34. Interacts with ULK1 (phosphorylated form), GABARAP, GABARAPL1, GABARAPL2, MAP1LC3A, MAP1LC3C and BECN1. Post-translationally, degraded in a proteasome-independent fashion in the absence of viral infection but in a proteasome-dependent fashion following exposure to restriction sensitive virus. In terms of processing, autoubiquitinated in a RING finger- and UBE2D2-dependent manner. Monoubiquitinated by TRIM21. Deubiquitinated by Yersinia YopJ. Ubiquitination may not lead to proteasomal degradation.

Its subcellular location is the cytoplasm. The protein localises to the nucleus. It catalyses the reaction S-ubiquitinyl-[E2 ubiquitin-conjugating enzyme]-L-cysteine + [acceptor protein]-L-lysine = [E2 ubiquitin-conjugating enzyme]-L-cysteine + N(6)-ubiquitinyl-[acceptor protein]-L-lysine.. It functions in the pathway protein modification; protein ubiquitination. Capsid-specific restriction factor that prevents infection from non-host-adapted retroviruses. Blocks viral replication early in the life cycle, after viral entry but before reverse transcription. In addition to acting as a capsid-specific restriction factor, also acts as a pattern recognition receptor that activates innate immune signaling in response to the retroviral capsid lattice. Binding to the viral capsid triggers its E3 ubiquitin ligase activity, and in concert with the heterodimeric ubiquitin conjugating enzyme complex UBE2V1-UBE2N (also known as UBC13-UEV1A complex) generates 'Lys-63'-linked polyubiquitin chains, which in turn are catalysts in the autophosphorylation of the MAP3K7/TAK1 complex (includes TAK1, TAB2, and TAB3). Activation of the MAP3K7/TAK1 complex by autophosphorylation results in the induction and expression of NF-kappa-B and MAPK-responsive inflammatory genes, thereby leading to an innate immune response in the infected cell. Plays a role in regulating autophagy through activation of autophagy regulator BECN1 by causing its dissociation from its inhibitors BCL2 and TAB2. In Chlorocebus aethiops (Green monkey), this protein is Tripartite motif-containing protein 5 (TRIM5).